The chain runs to 123 residues: Defensin beta 118 (123 aa).

An N-terminal signal peptide occupies residues Met-1–Pro-19. Intrachain disulfides connect Cys-27-Cys-54, Cys-34-Cys-48, and Cys-38-Cys-55. Disordered stretches follow at residues Asn-59–Gly-79 and Met-102–Ser-123. Residues Gln-64 to Ser-123 constitute a propeptide that is removed on maturation. Low complexity predominate over residues Pro-66–Gly-79.

This sequence belongs to the beta-defensin family. Post-translationally, the three-dimensional structure formed by the three intramolecular disulfide bridges is indispensable for antimicrobial activity.

The protein localises to the secreted. In terms of biological role, host defense peptide that exhibits antimicrobial activity against both Gram-negative bacteria, such as E.coli and S.typhimurium, and Gram-positive bacteria, such as S.aureus and B.subtilis. Inhibits cell adhesion of E.coli on intestinal epithelial enterocytes. Causes rapid permeabilization of both the outer and inner membrane of E.coli, leading to morphological alterations on the bacterial surface. Binds to bacterial lipopolysaccharides (LPS) with high affinity, and may thereby be involved in immunoregulation through LPS neutralization. May contribute to epididymal innate immunity and protect the sperm against attack by microorganisms. The polypeptide is Defensin beta 118 (DEFB118) (Hylobates lar (Lar gibbon)).